Consider the following 347-residue polypeptide: 5-deoxyribose 1-phosphate isomerase (347 aa).

Residues 48–50 (RGA), Arg91, and Gln198 contribute to the substrate site. Asp239 functions as the Proton donor in the catalytic mechanism. Substrate is bound at residue 249–250 (NK).

Belongs to the EIF-2B alpha/beta/delta subunits family. DrdI subfamily.

It catalyses the reaction 5-deoxy-alpha-D-ribose 1-phosphate = 5-deoxy-D-ribulose 1-phosphate. It participates in carbohydrate degradation. In terms of biological role, catalyzes the isomerization of 5-deoxy-alpha-D-ribose 1-phosphate to 5-deoxy-D-ribulose 1-phosphate, as part of a 5-deoxyribose salvage pathway that recycles this toxic radical SAM enzyme by-product to mainstream metabolites. This chain is 5-deoxyribose 1-phosphate isomerase, found in Bacillus thuringiensis (strain Al Hakam).